We begin with the raw amino-acid sequence, 226 residues long: PKHD-type hydroxylase PST_0995 (226 aa).

The region spanning Lys78 to Ser178 is the Fe2OG dioxygenase domain. Fe cation-binding residues include His96, Asp98, and His159. Arg169 is a binding site for 2-oxoglutarate.

Requires Fe(2+) as cofactor. L-ascorbate is required as a cofactor.

The sequence is that of PKHD-type hydroxylase PST_0995 from Stutzerimonas stutzeri (strain A1501) (Pseudomonas stutzeri).